A 249-amino-acid chain; its full sequence is Octanoyltransferase (249 aa).

The tract at residues Met1 to Ala23 is disordered. The BPL/LPL catalytic domain maps to Gly57–Arg241. Residues Arg95–His102, Ala170–Gly172, and Gly183–Ala185 each bind substrate. The Acyl-thioester intermediate role is filled by Cys201.

The protein belongs to the LipB family.

It localises to the cytoplasm. The enzyme catalyses octanoyl-[ACP] + L-lysyl-[protein] = N(6)-octanoyl-L-lysyl-[protein] + holo-[ACP] + H(+). Its pathway is protein modification; protein lipoylation via endogenous pathway; protein N(6)-(lipoyl)lysine from octanoyl-[acyl-carrier-protein]: step 1/2. Functionally, catalyzes the transfer of endogenously produced octanoic acid from octanoyl-acyl-carrier-protein onto the lipoyl domains of lipoate-dependent enzymes. Lipoyl-ACP can also act as a substrate although octanoyl-ACP is likely to be the physiological substrate. The protein is Octanoyltransferase of Bradyrhizobium diazoefficiens (strain JCM 10833 / BCRC 13528 / IAM 13628 / NBRC 14792 / USDA 110).